The primary structure comprises 213 residues: Nucleoside triphosphate pyrophosphatase (213 aa).

Asp77 (proton acceptor) is an active-site residue.

It belongs to the Maf family. A divalent metal cation is required as a cofactor.

It is found in the cytoplasm. The catalysed reaction is a ribonucleoside 5'-triphosphate + H2O = a ribonucleoside 5'-phosphate + diphosphate + H(+). It carries out the reaction a 2'-deoxyribonucleoside 5'-triphosphate + H2O = a 2'-deoxyribonucleoside 5'-phosphate + diphosphate + H(+). In terms of biological role, nucleoside triphosphate pyrophosphatase. May have a dual role in cell division arrest and in preventing the incorporation of modified nucleotides into cellular nucleic acids. This chain is Nucleoside triphosphate pyrophosphatase, found in Cutibacterium acnes (strain DSM 16379 / KPA171202) (Propionibacterium acnes).